We begin with the raw amino-acid sequence, 300 residues long: Phosphoenolpyruvate phosphomutase (300 aa).

A propeptide spanning residues methionine 1–phenylalanine 10 is cleaved from the precursor. The active-site Nucleophile is the aspartate 66.

This sequence belongs to the isocitrate lyase/PEP mutase superfamily. PEP mutase family.

It carries out the reaction phosphoenolpyruvate + H(+) = 3-phosphonopyruvate. It functions in the pathway phosphorus metabolism; phosphonate biosynthesis. Formation of a carbon-phosphorus bond by converting phosphoenolpyruvate (PEP) to phosphonopyruvate (P-Pyr). The protein is Phosphoenolpyruvate phosphomutase (PEPM) of Tetrahymena pyriformis.